A 449-amino-acid polypeptide reads, in one-letter code: Putative transporter C83.11 (449 aa).

9 helical membrane passes run 7 to 27 (LSHI…LWYI), 47 to 67 (VTLT…CLLF), 84 to 104 (VLYT…FGSL), 109 to 129 (IPVS…VLAY), 136 to 156 (VYSA…TLAC), 164 to 184 (IVGL…NIFG), 205 to 225 (LNLL…VWLY), 255 to 275 (ILAF…ASLI), and 278 to 298 (IFVI…TQGS). 2 positions are modified to phosphoserine: Ser-348 and Ser-352. Tyr-355 carries the phosphotyrosine modification. Residues 382-415 (NSVYSNEGVTSSVSGNATPASVRQSTQNDFSNSN) are compositionally biased toward polar residues. Residues 382–416 (NSVYSNEGVTSSVSGNATPASVRQSTQNDFSNSNI) form a disordered region.

The protein belongs to the TPT transporter family.

The protein resides in the membrane. In Schizosaccharomyces pombe (strain 972 / ATCC 24843) (Fission yeast), this protein is Putative transporter C83.11.